The chain runs to 136 residues: Large ribosomal subunit protein uL16 (136 aa).

Belongs to the universal ribosomal protein uL16 family. Part of the 50S ribosomal subunit.

Its function is as follows. Binds 23S rRNA and is also seen to make contacts with the A and possibly P site tRNAs. This Citrobacter koseri (strain ATCC BAA-895 / CDC 4225-83 / SGSC4696) protein is Large ribosomal subunit protein uL16.